Reading from the N-terminus, the 334-residue chain is Beta-ketoacyl-[acyl-carrier-protein] synthase III (334 aa).

Residues Cys-116 and His-256 contribute to the active site. The ACP-binding stretch occupies residues 257–261 (QANLR). Asn-286 is a catalytic residue.

It belongs to the thiolase-like superfamily. FabH family. Homodimer.

Its subcellular location is the cytoplasm. The enzyme catalyses malonyl-[ACP] + acetyl-CoA + H(+) = 3-oxobutanoyl-[ACP] + CO2 + CoA. It functions in the pathway lipid metabolism; fatty acid biosynthesis. In terms of biological role, catalyzes the condensation reaction of fatty acid synthesis by the addition to an acyl acceptor of two carbons from malonyl-ACP. Catalyzes the first condensation reaction which initiates fatty acid synthesis and may therefore play a role in governing the total rate of fatty acid production. Possesses both acetoacetyl-ACP synthase and acetyl transacylase activities. Its substrate specificity determines the biosynthesis of branched-chain and/or straight-chain of fatty acids. The chain is Beta-ketoacyl-[acyl-carrier-protein] synthase III from Phocaeicola vulgatus (strain ATCC 8482 / DSM 1447 / JCM 5826 / CCUG 4940 / NBRC 14291 / NCTC 11154) (Bacteroides vulgatus).